A 407-amino-acid polypeptide reads, in one-letter code: E3 ubiquitin-protein ligase TRIM13 (407 aa).

The RING-type zinc finger occupies 10 to 58 (CPICCSLFDDPRVLPCSHNFCKKCLEGLLEGNVRNSLWRPSPFKCPTCR). A B box-type zinc finger spans residues 89–131 (PKMPVCKEHLGQPLNIFCVTDMQLICGVCATRGSHTKHVFSSI). Positions 94, 97, 117, and 123 each coordinate Zn(2+). Residues 172-200 (LQLLTKDSDKVKEFFEKLQHTLDQKKNEI) adopt a coiled-coil conformation. A helical membrane pass occupies residues 316-336 (LLLMAVVLLGLLVFFGPTVFL).

Interacts (via C-terminal domain) with VCP. Interacts with AKT1; the interaction ubiquitinates AKT1 and leads to its proteasomal degradation. Interacts with MDM2; the interaction ubiquitinates AKT1 and leads to its proteasomal degradation. Interacts with p62/SQSTM1. Interacts with TRAF6. Interacts with IKBKG/NEMO. Post-translationally, auto-ubiquitinated; requires the RING-type zinc finger. Auto-polyubiquitination leads to proteasomal degradation.

Its subcellular location is the endoplasmic reticulum membrane. It carries out the reaction S-ubiquitinyl-[E2 ubiquitin-conjugating enzyme]-L-cysteine + [acceptor protein]-L-lysine = [E2 ubiquitin-conjugating enzyme]-L-cysteine + N(6)-ubiquitinyl-[acceptor protein]-L-lysine.. Its pathway is protein modification; protein ubiquitination. Its function is as follows. Endoplasmic reticulum (ER) membrane anchored E3 ligase involved in the retrotranslocation and turnover of membrane and secretory proteins from the ER through a set of processes named ER-associated degradation (ERAD). This process acts on misfolded proteins as well as in the regulated degradation of correctly folded proteins. Enhances ionizing radiation-induced p53/TP53 stability and apoptosis via ubiquitinating MDM2 and AKT1 and decreasing AKT1 kinase activity through MDM2 and AKT1 proteasomal degradation. Regulates ER stress-induced autophagy, and may act as a tumor suppressor. Also plays a role in innate immune response by stimulating NF-kappa-B activity in the TLR2 signaling pathway. Ubiquitinates TRAF6 via the 'Lys-29'-linked polyubiquitination chain resulting in NF-kappa-B activation. Participates as well in T-cell receptor-mediated NF-kappa-B activation. In the presence of TNF, modulates the IKK complex by regulating IKBKG/NEMO ubiquitination leading to the repression of NF-kappa-B. This Rattus norvegicus (Rat) protein is E3 ubiquitin-protein ligase TRIM13 (Trim13).